The primary structure comprises 389 residues: MQDINSGSSSMKDTYSSWIEISKRSLSNNLDNFRSILRPNSTLTAILKSNAYGHGIEPMTRLCIEAGISRIGVNSIEEALLIRNIDSKIPILIMGEIQNPEKRKNVLSDPNFWIVFSRPETARILSSFLPAPKLHLKIDTGMGRLGSHGETLKQTLSELKNVGITLGGICTHFASTEDVLEHKYSLMQTQKFEEAIFLAKSFGYNHLIRHACASASTMLFPNAHFDMVRIGISLYGLWPSIQTRLSLNLTGNKNFQLNPILSWKSRIVHIQYHPADSYIGYGSTFQTSYPTKVAIVPVGYYEGLDRKLSSNGDMLVLGKKARIIGRICMNMTMLDVTHIPGAEVGSIVTIIGQDGEESITADDLADRTHTINYEVMTRISESIPRIVVD.

The Proton acceptor; specific for D-alanine role is filled by lysine 48. Position 48 is an N6-(pyridoxal phosphate)lysine (lysine 48). Arginine 144 provides a ligand contact to substrate. Residue tyrosine 281 is the Proton acceptor; specific for L-alanine of the active site. Methionine 329 is a binding site for substrate.

The protein belongs to the alanine racemase family. It depends on pyridoxal 5'-phosphate as a cofactor.

It carries out the reaction L-alanine = D-alanine. It functions in the pathway amino-acid biosynthesis; D-alanine biosynthesis; D-alanine from L-alanine: step 1/1. Its function is as follows. Catalyzes the interconversion of L-alanine and D-alanine. May also act on other amino acids. The polypeptide is Alanine racemase (alr) (Leptospira interrogans serogroup Icterohaemorrhagiae serovar copenhageni (strain Fiocruz L1-130)).